The primary structure comprises 385 residues: Glucans biosynthesis protein C (385 aa).

Helical transmembrane passes span 17 to 37, 60 to 80, 91 to 111, 137 to 157, 173 to 193, 212 to 232, 239 to 259, 274 to 294, 311 to 331, and 338 to 358; these read AWLMLLGIPFHISLIYSSHTW, MQVFFVISGYFSYMLFLRYPL, VGIPMLTAIPLLTLPQFIMLQ, ISHLWFLLVLVVMTTLCVWIF, KFSMVKLSVIFLCLGIGYAVI, FIVMQTLFYLPFFILGALAFI, LFTTPSRGCTLAAALAFVAYL, TESVITMVLGLWMVNVVFSFG, ASLFIYLVHHPLTLFFGAYIT, and WLGFLCGLIFVVGIAIILYEI.

It belongs to the acyltransferase 3 family. OpgC subfamily.

It is found in the cell membrane. It participates in glycan metabolism; osmoregulated periplasmic glucan (OPG) biosynthesis. Its function is as follows. Necessary for the succinyl substitution of periplasmic glucans. Could catalyze the transfer of succinyl residues from the cytoplasmic side of the membrane to the nascent glucan backbones on the periplasmic side of the membrane. This chain is Glucans biosynthesis protein C, found in Escherichia coli O139:H28 (strain E24377A / ETEC).